Consider the following 271-residue polypeptide: Urease accessory protein UreD (271 aa).

The protein belongs to the UreD family. UreD, UreF and UreG form a complex that acts as a GTP-hydrolysis-dependent molecular chaperone, activating the urease apoprotein by helping to assemble the nickel containing metallocenter of UreC. The UreE protein probably delivers the nickel.

It localises to the cytoplasm. Required for maturation of urease via the functional incorporation of the urease nickel metallocenter. This is Urease accessory protein UreD from Haemophilus influenzae (strain 86-028NP).